Consider the following 386-residue polypeptide: Phosphomevalonate dehydratase large subunit (386 aa).

Glycine 48, valine 49, serine 50, asparagine 53, arginine 63, asparagine 79, and proline 80 together coordinate (R)-5-phosphomevalonate. A [4Fe-4S] cluster-binding site is contributed by cysteine 110. (R)-5-phosphomevalonate-binding residues include glutamate 129 and serine 130. Residues cysteine 283 and cysteine 342 each coordinate [4Fe-4S] cluster. Lysine 361 contacts (R)-5-phosphomevalonate.

The protein belongs to the AcnX type II large subunit family. As to quaternary structure, heterodimer composed of a large subunit (PMDh-L) and a small subunit (PMDh-S). [4Fe-4S] cluster serves as cofactor.

The catalysed reaction is (R)-5-phosphomevalonate = (2E)-3-methyl-5-phosphooxypent-2-enoate + H2O. The protein operates within isoprenoid biosynthesis; isopentenyl diphosphate biosynthesis via mevalonate pathway. Component of a hydro-lyase that catalyzes the dehydration of mevalonate 5-phosphate (MVA5P) to form trans-anhydromevalonate 5-phosphate (tAHMP). Involved in the archaeal mevalonate (MVA) pathway, which provides fundamental precursors for isoprenoid biosynthesis, such as isopentenyl diphosphate (IPP) and dimethylallyl diphosphate (DMAPP). The sequence is that of Phosphomevalonate dehydratase large subunit from Thermococcus kodakarensis (strain ATCC BAA-918 / JCM 12380 / KOD1) (Pyrococcus kodakaraensis (strain KOD1)).